We begin with the raw amino-acid sequence, 485 residues long: Lysine--tRNA ligase (485 aa).

Positions 391 and 398 each coordinate Mg(2+).

Belongs to the class-II aminoacyl-tRNA synthetase family. As to quaternary structure, homodimer. Mg(2+) serves as cofactor.

It localises to the cytoplasm. It carries out the reaction tRNA(Lys) + L-lysine + ATP = L-lysyl-tRNA(Lys) + AMP + diphosphate. This chain is Lysine--tRNA ligase, found in Blochmanniella floridana.